The primary structure comprises 637 residues: Threonine--tRNA ligase (637 aa).

Positions 1–61 constitute a TGS domain; the sequence is MLNITLPDGS…VEDSAVQIIT (61 aa). The segment at 242 to 533 is catalytic; sequence DHRKLGKQLD…LIENHAGSFP (292 aa). Positions 333, 384, and 510 each coordinate Zn(2+).

This sequence belongs to the class-II aminoacyl-tRNA synthetase family. In terms of assembly, homodimer. It depends on Zn(2+) as a cofactor.

It is found in the cytoplasm. The catalysed reaction is tRNA(Thr) + L-threonine + ATP = L-threonyl-tRNA(Thr) + AMP + diphosphate + H(+). Catalyzes the attachment of threonine to tRNA(Thr) in a two-step reaction: L-threonine is first activated by ATP to form Thr-AMP and then transferred to the acceptor end of tRNA(Thr). Also edits incorrectly charged L-seryl-tRNA(Thr). In Neisseria meningitidis serogroup A / serotype 4A (strain DSM 15465 / Z2491), this protein is Threonine--tRNA ligase.